The chain runs to 995 residues: KN motif and ankyrin repeat domain-containing protein 4 (995 aa).

2 disordered regions span residues 1-29 and 68-127; these read MEKTDAKDQSSQGDEEKDPPKSHPYSVET and TLPR…EVSY. Over residues 101–124 the composition is skewed to polar residues; that stretch reads LGTQEQNQSPPLGNAPQASTSRSE. Residues 343 to 404 are a coiled coil; it reads SSLKQQVSAL…EGQFHQENAK (62 aa). Disordered regions lie at residues 443–467, 503–558, 617–642, 663–705, and 721–740; these read ESWGHRGEENGLLWGPDGHKQGNQS, EAGT…PTDA, QAHPPKEPPASSSSPPVEISPSTSLK, LQFV…PDHK, and PEGTCHAAQESGPGEEVPHS. Gly residues predominate over residues 511–523; it reads GPQGGTRGAGGFL. Positions 526–549 are enriched in basic and acidic residues; sequence SDRKTPPAGREETSSNLPGKEHPG. A compositionally biased stretch (low complexity) spans 625–640; it reads PASSSSPPVEISPSTS. The span at 680–693 shows a compositional bias: acidic residues; the sequence is TSGEDSTPEDLSDS. Residues 694 to 705 are compositionally biased toward basic and acidic residues; sequence EAEKKCDGPDHK. ANK repeat units follow at residues 823-853, 862-890, 895-924, 928-958, and 962-992; these read NGNTALHYSVSHSNFSIVKLLLETGVCNVDH, VMITPLASAETNEDMAVVWKLLREGNVNI, GGQTALMLGVSHDREDMVQALLSCQADVNL, DGSSALMVACHHGNVDLVRLLLAHPACDSSL, and AGRTALSIALKSPTHMEIAGLLRAHAEQGRS.

Strongly expressed in colon, liver, lung, skeletal muscle and kidney.

It is found in the cytoplasm. Its function is as follows. May be involved in the control of cytoskeleton formation by regulating actin polymerization. This Homo sapiens (Human) protein is KN motif and ankyrin repeat domain-containing protein 4 (KANK4).